The following is a 260-amino-acid chain: Proteasome subunit alpha (260 aa).

Over residues alanine 237–serine 248 the composition is skewed to low complexity. Residues alanine 237–proline 260 are disordered. Residues valine 251–proline 260 show a composition bias toward basic and acidic residues.

The protein belongs to the peptidase T1A family. In terms of assembly, the 20S proteasome core is composed of 14 alpha and 14 beta subunits that assemble into four stacked heptameric rings, resulting in a barrel-shaped structure. The two inner rings, each composed of seven catalytic beta subunits, are sandwiched by two outer rings, each composed of seven alpha subunits. The catalytic chamber with the active sites is on the inside of the barrel. Has a gated structure, the ends of the cylinder being occluded by the N-termini of the alpha-subunits. Is capped by the proteasome-associated ATPase, ARC.

It localises to the cytoplasm. The protein operates within protein degradation; proteasomal Pup-dependent pathway. The formation of the proteasomal ATPase ARC-20S proteasome complex, likely via the docking of the C-termini of ARC into the intersubunit pockets in the alpha-rings, may trigger opening of the gate for substrate entry. Interconversion between the open-gate and close-gate conformations leads to a dynamic regulation of the 20S proteasome proteolysis activity. In terms of biological role, component of the proteasome core, a large protease complex with broad specificity involved in protein degradation. The polypeptide is Proteasome subunit alpha (Salinispora tropica (strain ATCC BAA-916 / DSM 44818 / JCM 13857 / NBRC 105044 / CNB-440)).